The primary structure comprises 200 residues: MARYTGPAWKLSRRLGISLSGTGKELEKRPYAPGPHGPNQRKKLSEYGLQLQEKQKLRHMYGMTERQFRRTFDQAGKMPGKHGENFMILLEARLDNLVYRMGLARTRRAARQLVNHGHITVDGSRVDIPSYRVKPGQTISVREKSNNLVVVKEAIEVNNFVPEYLTFDADKLEATYTRHAERAELPAEINEALIVEFYSR.

A disordered region spans residues 22–42; it reads TGKELEKRPYAPGPHGPNQRK. The 61-residue stretch at 92-152 folds into the S4 RNA-binding domain; sequence ARLDNLVYRM…EKSNNLVVVK (61 aa).

It belongs to the universal ribosomal protein uS4 family. Part of the 30S ribosomal subunit. Contacts protein S5. The interaction surface between S4 and S5 is involved in control of translational fidelity.

In terms of biological role, one of the primary rRNA binding proteins, it binds directly to 16S rRNA where it nucleates assembly of the body of the 30S subunit. With S5 and S12 plays an important role in translational accuracy. In Bacillus cereus (strain Q1), this protein is Small ribosomal subunit protein uS4.